The following is an 86-amino-acid chain: Exodeoxyribonuclease 7 small subunit (86 aa).

Residues 67-86 (RVSPASGGATEAPAPAERDR) form a disordered region.

Belongs to the XseB family. In terms of assembly, heterooligomer composed of large and small subunits.

It localises to the cytoplasm. The catalysed reaction is Exonucleolytic cleavage in either 5'- to 3'- or 3'- to 5'-direction to yield nucleoside 5'-phosphates.. Its function is as follows. Bidirectionally degrades single-stranded DNA into large acid-insoluble oligonucleotides, which are then degraded further into small acid-soluble oligonucleotides. The polypeptide is Exodeoxyribonuclease 7 small subunit (Beutenbergia cavernae (strain ATCC BAA-8 / DSM 12333 / CCUG 43141 / JCM 11478 / NBRC 16432 / NCIMB 13614 / HKI 0122)).